Reading from the N-terminus, the 607-residue chain is ATP-dependent RNA helicase-like protein DB10 (607 aa).

The span at 1-10 (MAVVTASSAG) shows a compositional bias: polar residues. Disordered regions lie at residues 1–25 (MAVV…KPWK) and 66–108 (VFVS…DGTS). In terms of domain architecture, WW spans 18–52 (PTLPKPWKGLVDGTTGFIYFWNPETNDTQYERPVP). Positions 89 to 98 (RGSNNKIARS) are enriched in polar residues. Residues 99–108 (SSDRFHDGTS) are compositionally biased toward basic and acidic residues. Residues 145-173 (TSFEATGFPSEIVREMHQAGFSAPTPIQA) carry the Q motif motif. The Helicase ATP-binding domain maps to 176–350 (WPIALQGRDI…ADLLVNSVQV (175 aa)). 189 to 196 (AKTGSGKT) contributes to the ATP binding site. A DEAD box motif is present at residues 298–301 (DEAD). Residues 379–523 (RVEQILRSKE…CVPTELRDMA (145 aa)) form the Helicase C-terminal domain. The disordered stretch occupies residues 519–607 (LRDMASRGGG…WSGKKSRFTD (89 aa)). Gly residues predominate over residues 538-548 (SGPGGRGGRGG). Over residues 562–574 (GYDRGSRDSDRYG) the composition is skewed to basic and acidic residues.

This sequence belongs to the DEAD box helicase family.

It carries out the reaction ATP + H2O = ADP + phosphate + H(+). The protein is ATP-dependent RNA helicase-like protein DB10 of Nicotiana sylvestris (Wood tobacco).